The sequence spans 166 residues: Cofilin-1 (166 aa).

Residue Ala-2 is modified to N-acetylalanine. Ser-3 and Ser-8 each carry phosphoserine. The 150-residue stretch at 4–153 folds into the ADF-H domain; the sequence is GVAVSDGVIK…KDRCTLAEKL (150 aa). Lys-13 carries the post-translational modification N6-acetyllysine. Thr-25 is modified (phosphothreonine). The Nuclear localization signal motif lies at 30-34; that stretch reads KKRKK. Ser-41 carries the phosphoserine modification. Tyr-68 is modified (phosphotyrosine). Lys-73 is subject to N6-acetyllysine. Residue Lys-132 forms a Glycyl lysine isopeptide (Lys-Gly) (interchain with G-Cter in SUMO2) linkage. Tyr-140 is subject to Phosphotyrosine. N6-acetyllysine is present on Lys-144. Ser-156 carries the post-translational modification Phosphoserine.

Belongs to the actin-binding proteins ADF family. In terms of assembly, can bind G- and F-actin in a 1:1 ratio of cofilin to actin. It is a major component of intranuclear and cytoplasmic actin rods. Interacts with the subcortical maternal complex (SCMC) via interaction with TLE6 and NLRP5. Interacts with C9orf72. In terms of processing, inactivated by phosphorylation on Ser-3. Phosphorylated on Ser-3 in resting cells. Dephosphorylated by PDXP/chronophin; this restores its activity in promoting actin filament depolymerization. The phosphorylation of Ser-24 may prevent recognition of the nuclear localization signal. Phosphorylated via a ARRB1-RAC1-LIMK1-PAK1 cascade upon active ligand stimulation of atypical chemokine receptor ACKR2.

The protein resides in the nucleus matrix. Its subcellular location is the cytoplasm. It is found in the cytoskeleton. The protein localises to the cell projection. It localises to the ruffle membrane. The protein resides in the lamellipodium membrane. Its subcellular location is the lamellipodium. It is found in the growth cone. The protein localises to the axon. Its function is as follows. Binds to F-actin and exhibits pH-sensitive F-actin depolymerizing activity. Important for normal progress through mitosis and normal cytokinesis. In conjunction with the subcortical maternal complex (SCMC), plays an essential role for zygotes to progress beyond the first embryonic cell divisions via regulation of actin dynamics. Required for the centralization of the mitotic spindle and symmetric division of zygotes. Plays a role in the regulation of cell morphology and cytoskeletal organization in epithelial cells. Required for the up-regulation of atypical chemokine receptor ACKR2 from endosomal compartment to cell membrane, increasing its efficiency in chemokine uptake and degradation. Required for neural tube morphogenesis and neural crest cell migration. This is Cofilin-1 (Cfl1) from Rattus norvegicus (Rat).